The primary structure comprises 230 residues: 2,3-bisphosphoglycerate-dependent phosphoglycerate mutase (230 aa).

Substrate-binding positions include 8–15 (RHGESEWN), 21–22 (TG), Arg-60, 87–90 (ERHY), Lys-98, 114–115 (RR), and 183–184 (GN). Residue His-9 is the Tele-phosphohistidine intermediate of the active site. The Proton donor/acceptor role is filled by Glu-87.

The protein belongs to the phosphoglycerate mutase family. BPG-dependent PGAM subfamily.

The enzyme catalyses (2R)-2-phosphoglycerate = (2R)-3-phosphoglycerate. Its pathway is carbohydrate degradation; glycolysis; pyruvate from D-glyceraldehyde 3-phosphate: step 3/5. In terms of biological role, catalyzes the interconversion of 2-phosphoglycerate and 3-phosphoglycerate. The chain is 2,3-bisphosphoglycerate-dependent phosphoglycerate mutase from Streptococcus pneumoniae (strain P1031).